The chain runs to 260 residues: MSRREDGRLDDELRPVTITRGFTTHPAGSVLVEFGETRVMCTASVTEGVPRWRKGSGQGWLTAEYAMLPAATHDRSDRESVKGRVGGRTQEISRLVGRSLRACIDLAALGENTIAIDCDVLQADGGTRTAAITGAFVALSDAVTYLGAAGKLSDPRPLSCAIAAVSVGVVDGRVRVDLPYTEDSRAEVDMNVVATDTGTLVEIQGTGEGATFPRSTLDKMLDAAMAACDQLFEIQRAALELPYPGTLPESAEPAKKAFGS.

Phosphate contacts are provided by residues R88 and 126–128 (GTR).

The protein belongs to the RNase PH family. Homohexameric ring arranged as a trimer of dimers.

The catalysed reaction is tRNA(n+1) + phosphate = tRNA(n) + a ribonucleoside 5'-diphosphate. In terms of biological role, phosphorolytic 3'-5' exoribonuclease that plays an important role in tRNA 3'-end maturation. Removes nucleotide residues following the 3'-CCA terminus of tRNAs; can also add nucleotides to the ends of RNA molecules by using nucleoside diphosphates as substrates, but this may not be physiologically important. Probably plays a role in initiation of 16S rRNA degradation (leading to ribosome degradation) during starvation. This chain is Ribonuclease PH, found in Mycolicibacterium gilvum (strain PYR-GCK) (Mycobacterium gilvum (strain PYR-GCK)).